Reading from the N-terminus, the 511-residue chain is Maturase K (511 aa).

Belongs to the intron maturase 2 family. MatK subfamily.

The protein localises to the plastid. Its function is as follows. Usually encoded in the trnK tRNA gene intron. Probably assists in splicing its own and other chloroplast group II introns. The polypeptide is Maturase K (Lathraea clandestina (Purple toothwort)).